Here is a 164-residue protein sequence, read N- to C-terminus: 6,7-dimethyl-8-ribityllumazine synthase 1 (164 aa).

Residues Phe-27, 58–60 (SLE), and 87–89 (TII) each bind 5-amino-6-(D-ribitylamino)uracil. 92–93 (DT) is a (2S)-2-hydroxy-3-oxobutyl phosphate binding site. His-95 acts as the Proton donor in catalysis. Asn-120 contributes to the 5-amino-6-(D-ribitylamino)uracil binding site. Arg-134 is a binding site for (2S)-2-hydroxy-3-oxobutyl phosphate.

The protein belongs to the DMRL synthase family. Homopentamer.

The catalysed reaction is (2S)-2-hydroxy-3-oxobutyl phosphate + 5-amino-6-(D-ribitylamino)uracil = 6,7-dimethyl-8-(1-D-ribityl)lumazine + phosphate + 2 H2O + H(+). Its pathway is cofactor biosynthesis; riboflavin biosynthesis; riboflavin from 2-hydroxy-3-oxobutyl phosphate and 5-amino-6-(D-ribitylamino)uracil: step 1/2. Functionally, catalyzes the formation of 6,7-dimethyl-8-ribityllumazine by condensation of 5-amino-6-(D-ribitylamino)uracil with 3,4-dihydroxy-2-butanone 4-phosphate. This is the penultimate step in the biosynthesis of riboflavin. The protein is 6,7-dimethyl-8-ribityllumazine synthase 1 (ribH1) of Mesorhizobium japonicum (strain LMG 29417 / CECT 9101 / MAFF 303099) (Mesorhizobium loti (strain MAFF 303099)).